Here is a 181-residue protein sequence, read N- to C-terminus: 3-hydroxyacyl-[acyl-carrier-protein] dehydratase FabZ (181 aa).

The active site involves His-54.

This sequence belongs to the thioester dehydratase family. FabZ subfamily.

Its subcellular location is the cytoplasm. It carries out the reaction a (3R)-hydroxyacyl-[ACP] = a (2E)-enoyl-[ACP] + H2O. Functionally, involved in unsaturated fatty acids biosynthesis. Catalyzes the dehydration of short chain beta-hydroxyacyl-ACPs and long chain saturated and unsaturated beta-hydroxyacyl-ACPs. This chain is 3-hydroxyacyl-[acyl-carrier-protein] dehydratase FabZ, found in Yersinia pestis.